Here is a 1287-residue protein sequence, read N- to C-terminus: Rho GTPase-activating protein 33 (1287 aa).

The interval 1–40 is disordered; that stretch reads MVARSTDSLDGPGEGSVQPLPTAGGPSVKGKPGKRLSAPR. Residue Ser8 is modified to Phosphoserine. Positions 59–168 constitute a PX; atypical domain; it reads FGHIQLLLSP…CGPVLTWMEL (110 aa). In terms of domain architecture, SH3 spans 186–248; that stretch reads PAVAAAHVIK…PSECVELFTE (63 aa). A Rho-GAP domain is found at 315 to 510; sequence CDLGEHLSNS…FLLTHVDVLF (196 aa). 6 disordered regions span residues 551-792, 813-832, 859-1030, 1056-1075, 1090-1134, and 1146-1287; these read RTQG…SPAA, AGGAPASATPTPALSPGRSL, KLRG…VPTP, GPPSFQPSSPAPVWRSSLGP, GASE…SPDF, and PPDH…RSYC. A compositionally biased stretch (low complexity) spans 558 to 571; sequence TPTEPTTPKAPASP. At Ser570 the chain carries Phosphoserine. Basic and acidic residues predominate over residues 572-584; that stretch reads AERRKGERGEKQR. Residues 622–645 show a composition bias toward polar residues; it reads SGSRPDTVTLRSAKSEESLSSQAS. Residue Ser636 is modified to Phosphoserine. Residues 672–709 are compositionally biased toward low complexity; that stretch reads AGSCESLSSSSSSESSSSESSSSSSESSAAGLGALSGS. Ser727 carries the phosphoserine modification. Residues 752 to 766 show a composition bias toward pro residues; that stretch reads PGDPAPPASPAPPAP. Composition is skewed to low complexity over residues 813–829 and 896–919; these read AGGAPASATPTPALSPG and PARLMALALAERAQQVAEQQSQQE. Composition is skewed to polar residues over residues 972–981 and 1019–1028; these read RQQSDGSLLR and SPCSVPSQVP. Tyr1169 carries the post-translational modification Phosphotyrosine. The segment covering 1175–1189 has biased composition (low complexity); it reads GPRGPSPASSSSSSP. Arg1244 is subject to Omega-N-methylarginine. Positions 1274-1287 are enriched in polar residues; the sequence is SWSLHSEGQTRSYC.

The protein belongs to the PX domain-containing GAP family. Specifically interacts with CDC42 and RHOQ/TC10 through its Rho-GAP domain. Interacts with NEK6.

In terms of biological role, may be involved in several stages of intracellular trafficking. Could play an important role in the regulation of glucose transport by insulin. May act as a downstream effector of RHOQ/TC10 in the regulation of insulin-stimulated glucose transport. The protein is Rho GTPase-activating protein 33 (ARHGAP33) of Homo sapiens (Human).